Consider the following 152-residue polypeptide: Immunity protein YobK (152 aa).

As to quaternary structure, interacts with cognate toxin YobL but not with non-cognate putative toxin YeeF. The interaction inhibits the toxic activity of YobL.

It is found in the cytoplasm. Functionally, immunity component of one of 6 LXG toxin-immunity modules in this strain. They promote kin selection, mediate competition in biofilms, and drive spatial segregation of different strains, indicating that LXG toxins may help avoid warfare between strains in biofilms. Mediates intercellular competition during biofilm formation; disruption of the operon disadvantages the bacteria, but overexpression of the cognate immunity protein restores growth in competition with wild-type. In situ neutralizes the toxic effect of cognate toxin YobL. Neutralizes the toxic activity of cognate toxin YobL upon expression in E.coli. Does not have immunity protein activity on other LXG toxins. In Bacillus subtilis (strain 168), this protein is Immunity protein YobK (yobK).